A 178-amino-acid polypeptide reads, in one-letter code: ATP synthase subunit delta (178 aa).

Belongs to the ATPase delta chain family. In terms of assembly, F-type ATPases have 2 components, F(1) - the catalytic core - and F(0) - the membrane proton channel. F(1) has five subunits: alpha(3), beta(3), gamma(1), delta(1), epsilon(1). F(0) has three main subunits: a(1), b(2) and c(10-14). The alpha and beta chains form an alternating ring which encloses part of the gamma chain. F(1) is attached to F(0) by a central stalk formed by the gamma and epsilon chains, while a peripheral stalk is formed by the delta and b chains.

Its subcellular location is the cell inner membrane. Its function is as follows. F(1)F(0) ATP synthase produces ATP from ADP in the presence of a proton or sodium gradient. F-type ATPases consist of two structural domains, F(1) containing the extramembraneous catalytic core and F(0) containing the membrane proton channel, linked together by a central stalk and a peripheral stalk. During catalysis, ATP synthesis in the catalytic domain of F(1) is coupled via a rotary mechanism of the central stalk subunits to proton translocation. In terms of biological role, this protein is part of the stalk that links CF(0) to CF(1). It either transmits conformational changes from CF(0) to CF(1) or is implicated in proton conduction. The protein is ATP synthase subunit delta of Laribacter hongkongensis (strain HLHK9).